The following is an 89-amino-acid chain: Small ribosomal subunit protein uS15 (89 aa).

Belongs to the universal ribosomal protein uS15 family. As to quaternary structure, part of the 30S ribosomal subunit. Forms a bridge to the 50S subunit in the 70S ribosome, contacting the 23S rRNA.

In terms of biological role, one of the primary rRNA binding proteins, it binds directly to 16S rRNA where it helps nucleate assembly of the platform of the 30S subunit by binding and bridging several RNA helices of the 16S rRNA. Its function is as follows. Forms an intersubunit bridge (bridge B4) with the 23S rRNA of the 50S subunit in the ribosome. The polypeptide is Small ribosomal subunit protein uS15 (Phocaeicola vulgatus (strain ATCC 8482 / DSM 1447 / JCM 5826 / CCUG 4940 / NBRC 14291 / NCTC 11154) (Bacteroides vulgatus)).